The following is a 666-amino-acid chain: ESX-1 secretion-associated protein EspI (666 aa).

Residues 1–15 (MAADYDKLFRPHEGM) show a composition bias toward basic and acidic residues. A disordered region spans residues 1-378 (MAADYDKLFR…ATKPPKVVSQ (378 aa)). The span at 22-31 (AAQPFFDPSA) shows a compositional bias: low complexity. Pro residues-rich tracts occupy residues 64–80 (APPP…PTPM), 87–144 (PPSP…PAPT), and 188–205 (PAPP…PAPS). A compositionally biased stretch (basic residues) spans 222 to 231 (HSRRARRGHR). Over residues 284–297 (PTRPAPTEPPPSPS) the composition is skewed to pro residues. The span at 357–371 (PKVKKVKPQKPKATK) shows a compositional bias: basic residues. 424–431 (LKGGAGKT) provides a ligand contact to ATP.

Functionally, required to repress ESX-1-mediated secretion under low ATP conditions. This function requires the ATP-binding motif. In Mycobacterium tuberculosis (strain CDC 1551 / Oshkosh), this protein is ESX-1 secretion-associated protein EspI.